A 743-amino-acid polypeptide reads, in one-letter code: Glycerol dehydrogenase large subunit (743 aa).

An N-terminal signal peptide occupies residues methionine 1–alanine 24. The span at alanine 27–glycine 41 shows a compositional bias: low complexity. Disordered stretches follow at residues alanine 27–aspartate 115 and isoleucine 445–methionine 474.

The protein belongs to the bacterial PQQ dehydrogenase family. Requires pyrroloquinoline quinone as cofactor.

It localises to the secreted. The catalysed reaction is glycerol + A = dihydroxyacetone + AH2. In terms of biological role, catalyzes the oxidation of glycerol to glycerone. Also acts, more slowly, on a number of other polyols including D-sorbitol, D-arabinitol, D-mannitol, meso-erythritol, adonitol and propylene glycol. In Gluconobacter oxydans (strain 621H) (Gluconobacter suboxydans), this protein is Glycerol dehydrogenase large subunit (sldA).